A 487-amino-acid chain; its full sequence is Beta-1,3-glucan-binding protein 1 (487 aa).

The signal sequence occupies residues 1 to 19; the sequence is MLKSVFVLFLVNYLNSVRC. In terms of domain architecture, CBM39 spans 20 to 119; it reads LEVPDAKLEA…GEWTVTGYVN (100 aa). The tract at residues 123–151 is disordered; sequence EPLDANFEPRSTASTAAPPQAGAGQAPGP. Over residues 133–150 the composition is skewed to low complexity; that stretch reads STASTAAPPQAGAGQAPG. The region spanning 157–487 is the GH16 domain; that stretch reads LSVSEVSVPG…LVDYVRVYAL (331 aa). Asparagine 368 carries N-linked (GlcNAc...) asparagine glycosylation.

As to quaternary structure, monomer. N-glycosylated. In terms of tissue distribution, fat body and hemolymph.

The protein localises to the secreted. In terms of biological role, involved in the recognition of invading microorganisms. Binds specifically to beta-1,3-glucan and activates the phenoloxidase cascade. Causes aggregation of invading microorganisms. The chain is Beta-1,3-glucan-binding protein 1 from Manduca sexta (Tobacco hawkmoth).